A 929-amino-acid polypeptide reads, in one-letter code: MWQKPSLTKSMMNEVSSNSPKSPTLTSSPSTQSFANRVLPGRNLDGGGGGSNRLIFGGSGGGSGGGSLPSSPVSSPVNPFNLNGGGGGKSSRRRGVTVAAGSEQVETRRKILLGNSRPFRRRARSMEILNSWDFIPYQKKPSDDEQGQVDQYIQGENDEDLTSYESYITNNNTTTTTNTNNSNNNNSNNDGSGSGSGAGGSFIGTTTSAKTTSTTSTSAATTTTTTTTSSSSSSPSSSSPSSTSPTIASNNDNNNKIEPPQPSKIANSVPPLTLSQSQTQQQQQQKVKPPPPSPRFSTNSSGSQSPPVPPRSSKSLGLSNDFSISLSSSMSSNSLLISGSINTLPTSSSSSSSVGGSGASAASASISSSSSLSSSSLSVSKLIYENNEENKFVVVSGPKDQLVEYLCNKNKLDFSFVNSFILSFRYFIEPEELFNHLMVKYETKVQTTSSIKVSKQFEEIQDRIRQNILIIISVWVDCNYSDFEDNLSLHKRLFKLVQDTPHAVFLRDSIDRQKVSKIPILDLYEKLKDELLLSLSPRGSLSGSGGISNNNNGSDLKNSNNGNNSSNNNNSSSNSSSSSSSSDIKNIKNSFFSLTTMMDWLMNHLSIGYATADSILKKLFKLKVIGSLGSGGGFTNISSSHTNSNSKSSKEELYFFTSTKSIINKEIYSRSFMDYSPQDIAKQLTLIEFKLFQSVKMKELYHKSWTISKSKFENSPNIMSLITMSNKIANWVATEVVTTPHPKKRVEVLKRFISVAEHCKKINNFNTLMEVISGLSNSAVSRLKETWKSLPTRYVNSFNSLQNFLKTDENWKSYRQTLKTKETPCLPYLGLFLQDINFIEDGNSNLSSENDWVNFKKMNLLTSVFTEIQYFQRHPYFSFSTHQNIQTYFEKDIVILPEKELYAFSKFIESPSNPLFRLSKSKNQSIFNI.

A compositionally biased stretch (polar residues) spans 1–15 (MWQKPSLTKSMMNEV). 2 disordered regions span residues 1-102 (MWQK…AAGS) and 169-316 (TNNN…SKSL). The span at 16 to 33 (SSNSPKSPTLTSSPSTQS) shows a compositional bias: low complexity. Gly residues predominate over residues 44–67 (LDGGGGGSNRLIFGGSGGGSGGGS). Composition is skewed to low complexity over residues 68–80 (LPSSPVSSPVNPF) and 169–191 (TNNNTTTTTNTNNSNNNNSNNDG). Positions 192–202 (SGSGSGAGGSF) are enriched in gly residues. A compositionally biased stretch (low complexity) spans 203–246 (IGTTTSAKTTSTTSTSAATTTTTTTTSSSSSSPSSSSPSSTSPT). Residues 247-256 (IASNNDNNNK) are compositionally biased toward polar residues. The span at 270–287 (PPLTLSQSQTQQQQQQKV) shows a compositional bias: low complexity. A compositionally biased stretch (polar residues) spans 295–305 (RFSTNSSGSQS). The 139-residue stretch at 390–528 (NKFVVVSGPK…PILDLYEKLK (139 aa)) folds into the N-terminal Ras-GEF domain. The disordered stretch occupies residues 540-583 (SLSGSGGISNNNNGSDLKNSNNGNNSSNNNNSSSNSSSSSSSSD). The Ras-GEF domain maps to 676–911 (SPQDIAKQLT…YAFSKFIESP (236 aa)).

Promotes the exchange of Ras-bound GDP by GTP. This is Ras guanine nucleotide exchange factor M (gefM) from Dictyostelium discoideum (Social amoeba).